The following is a 665-amino-acid chain: Dystrophia myotonica WD repeat-containing protein (665 aa).

Residues 1-11 (MAAGGAEGGPG) are compositionally biased toward gly residues. Disordered regions lie at residues 1-91 (MAAG…PALP) and 100-119 (LGDP…LGAG). Ala-2 is subject to N-acetylalanine. The segment covering 52–64 (PAPPQPTQPPPGP) has biased composition (pro residues). A compositionally biased stretch (low complexity) spans 65-76 (AAASGPGAAGPA). Residues 77-89 (SSPPPAGPGPGPA) are compositionally biased toward pro residues. WD repeat units follow at residues 208–248 (IDKT…TSTP), 279–318 (VGEG…LRGL), 321–360 (SYFG…VVAR), and 363–445 (GHKS…LSPH). 4 disordered regions span residues 380–413 (AEEA…VSPL), 446–506 (PSLA…SMEP), 524–564 (RDRG…RSRL), and 628–665 (DEET…GTVV). A compositionally biased stretch (low complexity) spans 450 to 491 (RTRTLPGTPGATPPASGSSRAGETGAGPLPRSLSRSNSLPHP). Ser-487 is modified (phosphoserine). Omega-N-methylarginine is present on Arg-543. One copy of the WD 5 repeat lies at 592–629 (IAQERLTVLLFLEDCIITACQEGLICTWARPGKAFTDE). The segment covering 634-646 (QAGQASWPRSPSK) has biased composition (polar residues). Positions 653 to 665 (SSQPGSSPSGTVV) are enriched in low complexity.

As to quaternary structure, component of the USP12/DMWD/WDR48 deubiquitinating complex. Interacts with USP12; promotes its enzymatic activity. Interacts with USP46. In terms of tissue distribution, widely expressed in brain where it localizes to the olfactory bulb, forebrain, thalamus, hippocampus, cerebellum, cortex and hypothalamus (at protein level). Expression seems to be particularly strong in areas of high synaptic density such as the glomerular layer of the olfactory bulb, and mossy fiber terminal fields of the hippocampus (at protein level). Expressed in retina, with strongest expression in the external and internal plexiform layers (at protein level). Strongly expressed in brain and testis. Also detected at lower levels in heart, kidney, liver, lung, ovary, uterus, bladder and skeletal muscle. In testis, expression seems to be restricted to secondary spermatocytes.

The protein resides in the cytoplasm. It is found in the nucleus. The protein localises to the perikaryon. It localises to the cell projection. Its subcellular location is the dendrite. Its function is as follows. Regulator of the deubiquitinating USP12/DMWD/WDR48 complex. Functions as a cofactor that promotes USP12 enzymatic activity. This Mus musculus (Mouse) protein is Dystrophia myotonica WD repeat-containing protein (Dmwd).